The chain runs to 271 residues: 3-methyl-2-oxobutanoate hydroxymethyltransferase (271 aa).

Positions 53 and 92 each coordinate Mg(2+). 3-methyl-2-oxobutanoate contacts are provided by residues 53 to 54 (DS), Asp-92, and Lys-120. Glu-122 is a binding site for Mg(2+). Glu-189 (proton acceptor) is an active-site residue.

Belongs to the PanB family. As to quaternary structure, homodecamer; pentamer of dimers. Mg(2+) is required as a cofactor.

Its subcellular location is the cytoplasm. The enzyme catalyses 3-methyl-2-oxobutanoate + (6R)-5,10-methylene-5,6,7,8-tetrahydrofolate + H2O = 2-dehydropantoate + (6S)-5,6,7,8-tetrahydrofolate. It functions in the pathway cofactor biosynthesis; (R)-pantothenate biosynthesis; (R)-pantoate from 3-methyl-2-oxobutanoate: step 1/2. In terms of biological role, catalyzes the reversible reaction in which hydroxymethyl group from 5,10-methylenetetrahydrofolate is transferred onto alpha-ketoisovalerate to form ketopantoate. In Paraburkholderia phytofirmans (strain DSM 17436 / LMG 22146 / PsJN) (Burkholderia phytofirmans), this protein is 3-methyl-2-oxobutanoate hydroxymethyltransferase.